The primary structure comprises 1160 residues: AF4/FMR2 family member 4 (1160 aa).

Residues 1-19 are compositionally biased toward basic and acidic residues; the sequence is MNREDRNVLRMKERERRNQ. Disordered regions lie at residues 1 to 42, 78 to 289, 322 to 908, and 1031 to 1070; these read MNRE…YKVT, PKPA…SKAH, WPPP…FDDR, and NSYS…SSGG. Residues 115–128 are compositionally biased toward polar residues; the sequence is PSTSQSQKRSSALQ. S120 bears the Phosphoserine mark. The span at 172–189 shows a compositional bias: low complexity; that stretch reads RSSSPGKPQAVSSLSSSH. The segment covering 193 to 212 has biased composition (basic and acidic residues); the sequence is HGNDHHSKEHQRSKSPRDPD. A Phosphoserine modification is found at S207. A compositionally biased stretch (low complexity) spans 229–247; that stretch reads SSQSFPPSLMSKSSSMLQK. Composition is skewed to polar residues over residues 268–280 and 360–370; these read EHYS…NSMT and YSTAKTSNGHQ. A phosphoserine mark is found at S382, S383, S384, and S387. Residues 398-407 show a composition bias toward polar residues; sequence PRSTPGSNSE. A compositionally biased stretch (basic and acidic residues) spans 408-424; it reads PSHHNSEGADNSRDDSS. The segment covering 425–457 has biased composition (low complexity); that stretch reads SHSGSESSSGSDSESESSSSDSEANEPSQSASP. A phosphoserine mark is found at S482, S485, and S486. 3 stretches are compositionally biased toward polar residues: residues 483–496, 505–523, and 544–555; these read PASS…SSQA, GTAS…SSAT, and SPAQSDSTTQRR. Position 544 is a phosphoserine (S544). Residues 563–581 show a composition bias toward basic and acidic residues; the sequence is KKPEKSAAEEPRGGLKIES. A Glycyl lysine isopeptide (Lys-Gly) (interchain with G-Cter in SUMO2) cross-link involves residue K578. The span at 594–607 shows a compositional bias: basic residues; the sequence is SRHKAATKGSRKPN. Over residues 608-622 the composition is skewed to basic and acidic residues; sequence IKKESKSSPRPTAEK. The span at 641–657 shows a compositional bias: low complexity; that stretch reads TDTSSSDSDGSESLPPS. S666 carries the post-translational modification Phosphoserine. At T669 the chain carries Phosphothreonine. A phosphoserine mark is found at S675, S689, S698, and S701. Y707 bears the Phosphotyrosine mark. Basic and acidic residues-rich tracts occupy residues 725-756, 764-784, and 794-806; these read PYKE…EKAS, KNDD…DKNS, and ESSK…EKDL. At S809 the chain carries Phosphoserine. K817 is subject to N6-acetyllysine. S831 bears the Phosphoserine mark. Composition is skewed to low complexity over residues 831–859 and 880–895; these read SQSS…SSTA and PNSS…TSES. 4 positions are modified to phosphoserine: S1040, S1052, S1055, and S1059. Over residues 1059–1070 the composition is skewed to low complexity; that stretch reads SPGNSGSYSSGG.

Belongs to the AF4 family. In terms of assembly, component of the super elongation complex (SEC), at least composed of EAF1, EAF2, CDK9, MLLT3/AF9, AFF (AFF1 or AFF4), the P-TEFb complex and ELL (ELL, ELL2 or ELL3). Interacts with ELL2; the interaction is direct and leads to stabilize ELL2 and prevent ELL2 ubiquitination and degradation. Interacts with ELL3; the interaction is direct. In terms of processing, dephosphorylated at Ser-544 by the PNUTS-PP1 complex, promoting RNA polymerase II transcription pause-release. In terms of tissue distribution, highly expressed in testis by Sertoli cells, and at low levels in other tissues.

It is found in the nucleus. Its subcellular location is the chromosome. In terms of biological role, key component of the super elongation complex (SEC), a complex required to increase the catalytic rate of RNA polymerase II transcription by suppressing transient pausing by the polymerase at multiple sites along the DNA. In the SEC complex, AFF4 acts as a central scaffold that recruits other factors through direct interactions with ELL proteins (ELL, ELL2 or ELL3) and the P-TEFb complex. This chain is AF4/FMR2 family member 4 (Aff4), found in Mus musculus (Mouse).